The chain runs to 325 residues: Elongation factor P--(R)-beta-lysine ligase (325 aa).

76–78 (SPE) serves as a coordination point for substrate. Residues 100-102 (RNE) and Asn109 contribute to the ATP site. Tyr118 contributes to the substrate binding site. 244–245 (EL) is a binding site for ATP. Position 251 (Glu251) interacts with substrate. Residue Gly300 coordinates ATP.

This sequence belongs to the class-II aminoacyl-tRNA synthetase family. EpmA subfamily. In terms of assembly, homodimer.

The catalysed reaction is D-beta-lysine + L-lysyl-[protein] + ATP = N(6)-((3R)-3,6-diaminohexanoyl)-L-lysyl-[protein] + AMP + diphosphate + H(+). With EpmB is involved in the beta-lysylation step of the post-translational modification of translation elongation factor P (EF-P). Catalyzes the ATP-dependent activation of (R)-beta-lysine produced by EpmB, forming a lysyl-adenylate, from which the beta-lysyl moiety is then transferred to the epsilon-amino group of a conserved specific lysine residue in EF-P. This is Elongation factor P--(R)-beta-lysine ligase from Erwinia tasmaniensis (strain DSM 17950 / CFBP 7177 / CIP 109463 / NCPPB 4357 / Et1/99).